Here is a 492-residue protein sequence, read N- to C-terminus: N-succinylglutamate 5-semialdehyde dehydrogenase (492 aa).

220–225 serves as a coordination point for NAD(+); that stretch reads GSANTG. Residues Glu243 and Cys277 contribute to the active site.

The protein belongs to the aldehyde dehydrogenase family. AstD subfamily.

The enzyme catalyses N-succinyl-L-glutamate 5-semialdehyde + NAD(+) + H2O = N-succinyl-L-glutamate + NADH + 2 H(+). It participates in amino-acid degradation; L-arginine degradation via AST pathway; L-glutamate and succinate from L-arginine: step 4/5. Its function is as follows. Catalyzes the NAD-dependent reduction of succinylglutamate semialdehyde into succinylglutamate. This chain is N-succinylglutamate 5-semialdehyde dehydrogenase, found in Escherichia coli O127:H6 (strain E2348/69 / EPEC).